Here is a 411-residue protein sequence, read N- to C-terminus: LL-diaminopimelate aminotransferase (411 aa).

Tyr15 and Gly42 together coordinate substrate. Residues Tyr72, 108–109, Tyr132, Asn187, Tyr218, and 246–248 each bind pyridoxal 5'-phosphate; these read SK and SFS. Lys109, Tyr132, and Asn187 together coordinate substrate. Lys249 is subject to N6-(pyridoxal phosphate)lysine. 2 residues coordinate pyridoxal 5'-phosphate: Arg257 and Asn292. Substrate contacts are provided by Asn292 and Arg388.

It belongs to the class-I pyridoxal-phosphate-dependent aminotransferase family. LL-diaminopimelate aminotransferase subfamily. In terms of assembly, homodimer. It depends on pyridoxal 5'-phosphate as a cofactor.

The enzyme catalyses (2S,6S)-2,6-diaminopimelate + 2-oxoglutarate = (S)-2,3,4,5-tetrahydrodipicolinate + L-glutamate + H2O + H(+). Its pathway is amino-acid biosynthesis; L-lysine biosynthesis via DAP pathway; LL-2,6-diaminopimelate from (S)-tetrahydrodipicolinate (aminotransferase route): step 1/1. Functionally, involved in the synthesis of meso-diaminopimelate (m-DAP or DL-DAP), required for both lysine and peptidoglycan biosynthesis. Catalyzes the direct conversion of tetrahydrodipicolinate to LL-diaminopimelate. In Gloeothece citriformis (strain PCC 7424) (Cyanothece sp. (strain PCC 7424)), this protein is LL-diaminopimelate aminotransferase.